The chain runs to 245 residues: Transcription factor FUP7 (245 aa).

Positions 10 to 37 form a DNA-binding region, zn(2)-C6 fungal-type; it reads CKTCRSRKQKCDGIRPACSRCRSLGLQC. Residues 162–216 are disordered; that stretch reads ESSSGNADYQHEDEVQSPAGAGDDMAVGDPYRDDSVDQDSIGQPPQRTESVGNMQ. Residues 199 to 214 are compositionally biased toward polar residues; that stretch reads QDSIGQPPQRTESVGN.

The protein resides in the nucleus. In terms of biological role, transcription factor; part of the gene cluster that mediates the biosynthesis of the mycotoxin fusaproliferin (FUP) that belongs to the class of bicyclic sesterterpenoids. The chain is Transcription factor FUP7 from Fusarium proliferatum (strain ET1) (Orchid endophyte fungus).